Consider the following 236-residue polypeptide: Ribonuclease HII (236 aa).

The 194-residue stretch at 21 to 214 (RTVAGVDEVG…LDALPRWQHL (194 aa)) folds into the RNase H type-2 domain. 3 residues coordinate a divalent metal cation: aspartate 27, glutamate 28, and aspartate 119.

The protein belongs to the RNase HII family. It depends on Mn(2+) as a cofactor. Mg(2+) serves as cofactor.

It is found in the cytoplasm. The enzyme catalyses Endonucleolytic cleavage to 5'-phosphomonoester.. Functionally, endonuclease that specifically degrades the RNA of RNA-DNA hybrids. In Streptomyces griseus subsp. griseus (strain JCM 4626 / CBS 651.72 / NBRC 13350 / KCC S-0626 / ISP 5235), this protein is Ribonuclease HII.